Reading from the N-terminus, the 496-residue chain is MKVLQFNQDATCCVVAASSHQISIFNCDPFGKCFEIDTKNSKKKTSNNNGTASNSESRNNEESILITNGSRDRTDAEEEEDNEDNALVTGNILKEGEFVIEMLFSTSLIAIADRGQGLNKGKKLKIVNTKRKSTICEIVFPHEIVDVVMNRKRMCVLLESDQIFIYDISCMKPLETIDLWEDHYKRSQANSFSNASNTGTLEGDSANLNRVATNLLANATQKSVNGSNPSVRTRRNSLRSKIRPRMVLSNDDRSILCFTAYSSPKKNKPNSEALYDVVIYDTLNVTPVNYLNSVHKGNVACLAVSHDGKLLATASDKGTIIRVFHTGVDSDYMSSRSLFKEFRRGTRLCNLYQLAFDKSMTMIGCVGDTDTIHLFKLDDASNSLPGDNSSNGHWNEEEDILASNSNPSMGTPKEIPLSKPRIANYFSKKIKSSIPNQNLSRNFAYITVNESNRSCLGFPDEFPNQVYIASDDGTFSIYSIPSKPGECVLTKNNKFT.

Residues 1 to 35 (MKVLQFNQDATCCVVAASSHQISIFNCDPFGKCFE) form a WD 1 repeat. The interval 41 to 86 (SKKKTSNNNGTASNSESRNNEESILITNGSRDRTDAEEEEDNEDNA) is disordered. Positions 46–57 (SNNNGTASNSES) are enriched in low complexity. Residues 75–84 (DAEEEEDNED) show a composition bias toward acidic residues. A WD 2 repeat occupies 148-190 (VMNRKRMCVLLESDQIFIYDISCMKPLETIDLWEDHYKRSQAN). A Phosphothreonine modification is found at Thr-213. At Ser-237 the chain carries Phosphoserine. 3 WD repeats span residues 294 to 334 (VHKG…DYMS), 346 to 385 (TRLC…NSLP), and 448 to 488 (VNES…GECV). Residues 342-346 (FRRGT) carry the L/FRRG motif motif.

The protein belongs to the WD repeat PROPPIN family.

Its subcellular location is the cytoplasm. It localises to the vacuole membrane. Its function is as follows. Required for cytoplasm to vacuole transport (Cvt) vesicles formation and mitophagy. Involved in binding of phosphatidylethanolamine to ATG8 and in recruitment of ATG8 and ATG5 to the pre-autophagosomal structure. Protects ATG8 from ARG4-mediated cleavage. Essential for maturation of proaminopeptidase I. The chain is Autophagy-related protein 21 (ATG21) from Saccharomyces cerevisiae (strain YJM789) (Baker's yeast).